Here is a 341-residue protein sequence, read N- to C-terminus: UPF0284 protein Ta0078 (341 aa).

Belongs to the UPF0284 family.

This Thermoplasma acidophilum (strain ATCC 25905 / DSM 1728 / JCM 9062 / NBRC 15155 / AMRC-C165) protein is UPF0284 protein Ta0078.